Consider the following 451-residue polypeptide: Tubulin alpha-3 chain (451 aa).

Position 11 (glutamine 11) interacts with GTP. Lysine 40 is subject to N6-acetyllysine. GTP contacts are provided by glutamate 71, serine 140, glycine 144, threonine 145, threonine 179, asparagine 206, and asparagine 228. Residue glutamate 71 coordinates Mg(2+). Glutamate 254 is an active-site residue.

Belongs to the tubulin family. In terms of assembly, dimer of alpha and beta chains. A typical microtubule is a hollow water-filled tube with an outer diameter of 25 nm and an inner diameter of 15 nM. Alpha-beta heterodimers associate head-to-tail to form protofilaments running lengthwise along the microtubule wall with the beta-tubulin subunit facing the microtubule plus end conferring a structural polarity. Microtubules usually have 13 protofilaments but different protofilament numbers can be found in some organisms and specialized cells. Requires Mg(2+) as cofactor. In terms of processing, undergoes a tyrosination/detyrosination cycle, the cyclic removal and re-addition of a C-terminal tyrosine residue by the enzymes tubulin tyrosine carboxypeptidase (TTCP) and tubulin tyrosine ligase (TTL), respectively. Acetylation of alpha chains at Lys-40 stabilizes microtubules and affects affinity and processivity of microtubule motors. This modification has a role in multiple cellular functions, ranging from cell motility, cell cycle progression or cell differentiation to intracellular trafficking and signaling.

Its subcellular location is the cytoplasm. It is found in the cytoskeleton. The enzyme catalyses GTP + H2O = GDP + phosphate + H(+). Tubulin is the major constituent of microtubules, a cylinder consisting of laterally associated linear protofilaments composed of alpha- and beta-tubulin heterodimers. Microtubules grow by the addition of GTP-tubulin dimers to the microtubule end, where a stabilizing cap forms. Below the cap, tubulin dimers are in GDP-bound state, owing to GTPase activity of alpha-tubulin. This is Tubulin alpha-3 chain from Homarus americanus (American lobster).